We begin with the raw amino-acid sequence, 260 residues long: Putative ABC transporter ATP-binding protein PYRAB01300 (260 aa).

An ABC transporter domain is found at 2 to 234; that stretch reads IEFKDVWFWY…DLRNFSLVEP (233 aa). 34-41 contacts ATP; that stretch reads GPNGSGKT.

The protein belongs to the ABC transporter superfamily.

The protein localises to the cell membrane. Its function is as follows. Probably part of an ABC transporter complex. Responsible for energy coupling to the transport system. The chain is Putative ABC transporter ATP-binding protein PYRAB01300 from Pyrococcus abyssi (strain GE5 / Orsay).